Consider the following 271-residue polypeptide: Putative phosphoenolpyruvate synthase regulatory protein (271 aa).

An ADP-binding site is contributed by 151–158 (GVSRSGKT).

Belongs to the pyruvate, phosphate/water dikinase regulatory protein family. PSRP subfamily.

The catalysed reaction is [pyruvate, water dikinase] + ADP = [pyruvate, water dikinase]-phosphate + AMP + H(+). It carries out the reaction [pyruvate, water dikinase]-phosphate + phosphate + H(+) = [pyruvate, water dikinase] + diphosphate. Bifunctional serine/threonine kinase and phosphorylase involved in the regulation of the phosphoenolpyruvate synthase (PEPS) by catalyzing its phosphorylation/dephosphorylation. This chain is Putative phosphoenolpyruvate synthase regulatory protein, found in Burkholderia mallei (strain NCTC 10247).